Reading from the N-terminus, the 480-residue chain is Amino acid permease 5 (480 aa).

The tract at residues 1 to 25 is disordered; it reads MVVQNVQDLDVLPKHSSDSFDDDGR. Topologically, residues 1–31 are cytoplasmic; it reads MVVQNVQDLDVLPKHSSDSFDDDGRPKRTGT. Over residues 11 to 25 the composition is skewed to basic and acidic residues; the sequence is VLPKHSSDSFDDDGR. 2 helical membrane passes run 32–52 and 53–73; these read VWTASAHIITAVIGSGVLSLA and WAVAQIGWIGGPVAMLLFSFV. The Cytoplasmic segment spans residues 74 to 120; that stretch reads TFYTSTLLCSCYRSGDSVTGKRNYTYMDAIHSNLGGIKVKVCGVVQY. Residues 121–141 traverse the membrane as a helical segment; it reads VNLFGTAIGYTIASAISLVAI. The Extracellular segment spans residues 142 to 157; it reads QRTSCQQMNGPNDPCH. Residues 158 to 178 traverse the membrane as a helical segment; sequence VNGNVYMIAFGIVQIIFSQIP. Over 179 to 182 the chain is Cytoplasmic; it reads DFDQ. A helical membrane pass occupies residues 183-203; that stretch reads LWWLSIVAAVMSFAYSAIGLG. Over 204 to 241 the chain is Extracellular; that stretch reads LGVSKVVENKEIKGSLTGVTVGTVTLSGTVTSSQKIWR. A helical transmembrane segment spans residues 242-262; it reads TFQSLGNIAFAYSYSMILIEI. Over 263 to 280 the chain is Cytoplasmic; it reads QDTVKSPPAEVNTMRKAT. The helical transmembrane segment at 281–301 threads the bilayer; the sequence is FVSVAVTTVFYMLCGCVGYAA. The Extracellular segment spans residues 302-328; the sequence is FGDNAPGNLLAHGGFRNPYWLLDIANL. The helical transmembrane segment at 329 to 349 threads the bilayer; the sequence is AIVIHLVGAYQVYCQPLFAFV. The Cytoplasmic portion of the chain corresponds to 350–383; that stretch reads EKEASRRFPESEFVTKEIKIQLFPGKPFNLNLFR. The helical transmembrane segment at 384-404 threads the bilayer; the sequence is LVWRTFFVMTTTLISMLMPFF. Residues 405-406 lie on the Extracellular side of the membrane; sequence ND. A helical membrane pass occupies residues 407-427; it reads VVGLLGAIGFWPLTVYFPVEM. Residues 428–445 are Cytoplasmic-facing; that stretch reads YIAQKNVPRWGTKWVCLQ. The helical transmembrane segment at 446-466 threads the bilayer; that stretch reads VLSVTCLFVSVAAAAGSVIGI. The Extracellular segment spans residues 467 to 480; the sequence is VSDLKVYKPFQSEF.

Belongs to the amino acid/polyamine transporter 2 family. Amino acid/auxin permease (AAAP) (TC 2.A.18.2) subfamily. In terms of tissue distribution, expressed in leaves, stems, roots, siliques and flowers.

The protein localises to the cell membrane. Its activity is regulated as follows. Inhibited by 2,4-dinitrophenol. Functionally, amino acid-proton symporter. Stereospecific transporter with a broad specificity for glutamate and both neutral and basic amino acids. Reduced affinities for asparagine and valine. High affinity transport of the cationic amino acids arginine and lysine, but not of histidine. This is Amino acid permease 5 (AAP5) from Arabidopsis thaliana (Mouse-ear cress).